A 218-amino-acid polypeptide reads, in one-letter code: Eukaryotic translation initiation factor 3 subunit K (218 aa).

The residue at position 2 (alanine 2) is an N-acetylalanine. A Phosphothreonine modification is found at threonine 28. Residues tyrosine 42–lysine 204 enclose the PCI domain. A Phosphoserine modification is found at serine 217.

As to quaternary structure, component of the eukaryotic translation initiation factor 3 (eIF-3) complex, which is composed of 13 subunits: EIF3A, EIF3B, EIF3C, EIF3D, EIF3E, EIF3F, EIF3G, EIF3H, EIF3I, EIF3J, EIF3K, EIF3L and EIF3M. The eIF-3 complex appears to include 3 stable modules: module A is composed of EIF3A, EIF3B, EIF3G and EIF3I; module B is composed of EIF3F, EIF3H, and EIF3M; and module C is composed of EIF3C, EIF3D, EIF3E, EIF3K and EIF3L. EIF3C of module C binds EIF3B of module A and EIF3H of module B, thereby linking the three modules. EIF3J is a labile subunit that binds to the eIF-3 complex via EIF3B. The eIF-3 complex interacts with RPS6KB1 under conditions of nutrient depletion. Mitogenic stimulation leads to binding and activation of a complex composed of MTOR and RPTOR, leading to phosphorylation and release of RPS6KB1 and binding of EIF4B to eIF-3. Interacts with CCND3, but not with CCND1 and CCND2. As to expression, ubiquitous, with the highest levels of expression in brain, testis and kidney.

The protein resides in the nucleus. It is found in the cytoplasm. Its function is as follows. Component of the eukaryotic translation initiation factor 3 (eIF-3) complex, which is required for several steps in the initiation of protein synthesis. The eIF-3 complex associates with the 40S ribosome and facilitates the recruitment of eIF-1, eIF-1A, eIF-2:GTP:methionyl-tRNAi and eIF-5 to form the 43S pre-initiation complex (43S PIC). The eIF-3 complex stimulates mRNA recruitment to the 43S PIC and scanning of the mRNA for AUG recognition. The eIF-3 complex is also required for disassembly and recycling of post-termination ribosomal complexes and subsequently prevents premature joining of the 40S and 60S ribosomal subunits prior to initiation. The eIF-3 complex specifically targets and initiates translation of a subset of mRNAs involved in cell proliferation, including cell cycling, differentiation and apoptosis, and uses different modes of RNA stem-loop binding to exert either translational activation or repression. In Homo sapiens (Human), this protein is Eukaryotic translation initiation factor 3 subunit K.